The chain runs to 329 residues: MKLAVYSTKQYDKKYLQQVNESFGFELEFFDFLLTEKTAKTANGCEAVCIFVNDDGSRPVLEELKKHGVKYIALRCAGFNNVDLDAAKELGLKVVRVPAYDPEAVAEHAIGMMMTLNRRIHRAYQRTRDANFSLEGLTGFTMYGKTAGVIGTGKIGVAMLRILKGFGMRLLAFDPYPSAAALELGVEYVDLPTLFSESDVISLHCPLTPENYHLLNEAAFEQMKNGVMIVNTSRGALIDSQAAIEALKNQKIGSLGMDVYENERDLFFEDKSNDVIQDDVFRRLSACHNVLFTGHQAFLTAEALTSISQTTLQNLSNLEKGETCPNELV.

Residues 154–155, D174, 205–206, N211, 232–234, and D258 contribute to the NAD(+) site; these read KI, CP, and TSR. R234 is a catalytic residue. E263 is an active-site residue. The active-site Proton donor is H295.

It belongs to the D-isomer specific 2-hydroxyacid dehydrogenase family.

It carries out the reaction (R)-lactate + NAD(+) = pyruvate + NADH + H(+). In terms of biological role, fermentative lactate dehydrogenase. The chain is D-lactate dehydrogenase (ldhA) from Escherichia coli (strain K12).